The sequence spans 304 residues: Ribonuclease Z (304 aa).

Positions 63, 65, 67, 68, 143, 213, and 271 each coordinate Zn(2+). The active-site Proton acceptor is Asp67.

The protein belongs to the RNase Z family. In terms of assembly, homodimer. The cofactor is Zn(2+).

It catalyses the reaction Endonucleolytic cleavage of RNA, removing extra 3' nucleotides from tRNA precursor, generating 3' termini of tRNAs. A 3'-hydroxy group is left at the tRNA terminus and a 5'-phosphoryl group is left at the trailer molecule.. Functionally, zinc phosphodiesterase, which displays some tRNA 3'-processing endonuclease activity. Probably involved in tRNA maturation, by removing a 3'-trailer from precursor tRNA. The chain is Ribonuclease Z from Porphyromonas gingivalis (strain ATCC 33277 / DSM 20709 / CIP 103683 / JCM 12257 / NCTC 11834 / 2561).